A 395-amino-acid polypeptide reads, in one-letter code: Elongation factor Tu (395 aa).

The region spanning lysine 10–glutamate 204 is the tr-type G domain. The interval glycine 19–threonine 26 is G1. GTP is bound at residue glycine 19–threonine 26. Threonine 26 contributes to the Mg(2+) binding site. The G2 stretch occupies residues glycine 60–asparagine 64. The tract at residues aspartate 81 to glycine 84 is G3. GTP is bound by residues aspartate 81–histidine 85 and asparagine 136–aspartate 139. The G4 stretch occupies residues asparagine 136 to aspartate 139. The interval serine 174 to leucine 176 is G5.

It belongs to the TRAFAC class translation factor GTPase superfamily. Classic translation factor GTPase family. EF-Tu/EF-1A subfamily. Monomer.

It localises to the cytoplasm. It carries out the reaction GTP + H2O = GDP + phosphate + H(+). Its function is as follows. GTP hydrolase that promotes the GTP-dependent binding of aminoacyl-tRNA to the A-site of ribosomes during protein biosynthesis. The sequence is that of Elongation factor Tu from Christiangramia forsetii (strain DSM 17595 / CGMCC 1.15422 / KT0803) (Gramella forsetii).